Consider the following 287-residue polypeptide: Centromere protein P (287 aa).

A coiled-coil region spans residues Met-1–Phe-37.

The protein belongs to the CENP-P/CTF19 family. Component of the CENPA-HI complex, at least composed of CENPH, CENPI, CENPK, CENPL, CENPM, CENPO and CENPP.

Its subcellular location is the nucleus. It localises to the chromosome. It is found in the centromere. Functionally, component of the CENPA-HI complex, a centromeric complex involved in assembly of kinetochore proteins, mitotic progression and chromosome segregation. The polypeptide is Centromere protein P (CENPP) (Gallus gallus (Chicken)).